A 342-amino-acid polypeptide reads, in one-letter code: Isopentenyl-diphosphate delta-isomerase (342 aa).

Substrate is bound at residue 11-12 (RK). FMN is bound by residues serine 68, 69-71 (SMT), serine 99, and asparagine 128. A substrate-binding site is contributed by 99–101 (SQR). Glutamine 162 provides a ligand contact to substrate. Residue glutamate 163 participates in Mg(2+) binding. Residues lysine 194, serine 219, threonine 224, 275–277 (GVR), and 296–297 (AK) each bind FMN.

Belongs to the IPP isomerase type 2 family. Homooctamer. Dimer of tetramers. The cofactor is FMN. It depends on NADPH as a cofactor. Mg(2+) is required as a cofactor.

The protein localises to the cytoplasm. The catalysed reaction is isopentenyl diphosphate = dimethylallyl diphosphate. In terms of biological role, involved in the biosynthesis of isoprenoids. Catalyzes the 1,3-allylic rearrangement of the homoallylic substrate isopentenyl (IPP) to its allylic isomer, dimethylallyl diphosphate (DMAPP). In Legionella pneumophila subsp. pneumophila (strain Philadelphia 1 / ATCC 33152 / DSM 7513), this protein is Isopentenyl-diphosphate delta-isomerase.